Consider the following 254-residue polypeptide: Ubiquinone/menaquinone biosynthesis C-methyltransferase UbiE (254 aa).

S-adenosyl-L-methionine is bound by residues Thr77, Asp98, Asp126–Ala127, and Ser143.

The protein belongs to the class I-like SAM-binding methyltransferase superfamily. MenG/UbiE family.

It carries out the reaction a 2-demethylmenaquinol + S-adenosyl-L-methionine = a menaquinol + S-adenosyl-L-homocysteine + H(+). It catalyses the reaction a 2-methoxy-6-(all-trans-polyprenyl)benzene-1,4-diol + S-adenosyl-L-methionine = a 5-methoxy-2-methyl-3-(all-trans-polyprenyl)benzene-1,4-diol + S-adenosyl-L-homocysteine + H(+). It functions in the pathway quinol/quinone metabolism; menaquinone biosynthesis; menaquinol from 1,4-dihydroxy-2-naphthoate: step 2/2. Its pathway is cofactor biosynthesis; ubiquinone biosynthesis. Methyltransferase required for the conversion of demethylmenaquinol (DMKH2) to menaquinol (MKH2) and the conversion of 2-polyprenyl-6-methoxy-1,4-benzoquinol (DDMQH2) to 2-polyprenyl-3-methyl-6-methoxy-1,4-benzoquinol (DMQH2). The polypeptide is Ubiquinone/menaquinone biosynthesis C-methyltransferase UbiE (Blochmanniella pennsylvanica (strain BPEN)).